The sequence spans 804 residues: Probable phosphoketolase (804 aa).

This sequence belongs to the XFP family. Requires thiamine diphosphate as cofactor.

This chain is Probable phosphoketolase, found in Mycolicibacterium paratuberculosis (strain ATCC BAA-968 / K-10) (Mycobacterium paratuberculosis).